The primary structure comprises 82 residues: Phosphoribosylformylglycinamidine synthase subunit PurS (82 aa).

It belongs to the PurS family. In terms of assembly, homodimer. Part of the FGAM synthase complex composed of 1 PurL, 1 PurQ and 2 PurS subunits.

The protein resides in the cytoplasm. It catalyses the reaction N(2)-formyl-N(1)-(5-phospho-beta-D-ribosyl)glycinamide + L-glutamine + ATP + H2O = 2-formamido-N(1)-(5-O-phospho-beta-D-ribosyl)acetamidine + L-glutamate + ADP + phosphate + H(+). It participates in purine metabolism; IMP biosynthesis via de novo pathway; 5-amino-1-(5-phospho-D-ribosyl)imidazole from N(2)-formyl-N(1)-(5-phospho-D-ribosyl)glycinamide: step 1/2. In terms of biological role, part of the phosphoribosylformylglycinamidine synthase complex involved in the purines biosynthetic pathway. Catalyzes the ATP-dependent conversion of formylglycinamide ribonucleotide (FGAR) and glutamine to yield formylglycinamidine ribonucleotide (FGAM) and glutamate. The FGAM synthase complex is composed of three subunits. PurQ produces an ammonia molecule by converting glutamine to glutamate. PurL transfers the ammonia molecule to FGAR to form FGAM in an ATP-dependent manner. PurS interacts with PurQ and PurL and is thought to assist in the transfer of the ammonia molecule from PurQ to PurL. The chain is Phosphoribosylformylglycinamidine synthase subunit PurS from Thermotoga maritima (strain ATCC 43589 / DSM 3109 / JCM 10099 / NBRC 100826 / MSB8).